We begin with the raw amino-acid sequence, 512 residues long: Putative ankyrin repeat protein FPV233 (512 aa).

ANK repeat units follow at residues 45-73 (IPFIPLHQAIEARNIDIIKSIITVDNVNQ), 77-106 (DDTYPIHIICKEPNMLAISYMLRSINQCSV), 136-168 (IQDIDLKYIDKKSKDDIIEITKLLFSYGADINM), 172-201 (HGNSPLHYATENPDQRLTRLLLSKGANPNI), 205-236 (TNKSPLYYSIESDNPDITMLLIDKFIFNNTDP), 238-262 (LSHAIKHYRKPILHALIENGASINA), 266-296 (YGNTPLHYAVSYCKDIDVIKLLLERGVDVNA), and 301-329 (RNLTPLHSSYLKSPRVLKLLLQYGADINS).

This Vertebrata (FPV) protein is Putative ankyrin repeat protein FPV233.